We begin with the raw amino-acid sequence, 391 residues long: Elongation factor Tu (391 aa).

The tr-type G domain maps to 10–201; that stretch reads KPHVNIGTIG…AVDSYIPTPE (192 aa). The G1 stretch occupies residues 19–26; the sequence is GHVDHGKT. GTP is bound at residue 19–26; the sequence is GHVDHGKT. Residue Thr-26 coordinates Mg(2+). The interval 55-59 is G2; sequence GITIS. The interval 76–79 is G3; that stretch reads DCPG. Residues 76–80 and 131–134 each bind GTP; these read DCPGH and NKCD. The tract at residues 131–134 is G4; sequence NKCD. The G5 stretch occupies residues 169–171; sequence SAL.

It belongs to the TRAFAC class translation factor GTPase superfamily. Classic translation factor GTPase family. EF-Tu/EF-1A subfamily. Monomer.

Its subcellular location is the cytoplasm. It carries out the reaction GTP + H2O = GDP + phosphate + H(+). Its function is as follows. GTP hydrolase that promotes the GTP-dependent binding of aminoacyl-tRNA to the A-site of ribosomes during protein biosynthesis. This Brucella canis (strain ATCC 23365 / NCTC 10854 / RM-666) protein is Elongation factor Tu.